Consider the following 205-residue polypeptide: Holliday junction branch migration complex subunit RuvA (205 aa).

Residues 1-64 (MIGKLKGVVD…EDMIRLYGFR (64 aa)) form a domain I region. Residues 65–143 (SDAEREWFRL…AFAPVDPALI (79 aa)) form a domain II region. Residues 144–152 (RLAGAVEER) are flexible linker. Positions 153–205 (TAPQPVADAISALVNLGYPQIQASAAVAAALQGAGEGAEAKTLIRLGLRELAR) are domain III.

It belongs to the RuvA family. As to quaternary structure, homotetramer. Forms an RuvA(8)-RuvB(12)-Holliday junction (HJ) complex. HJ DNA is sandwiched between 2 RuvA tetramers; dsDNA enters through RuvA and exits via RuvB. An RuvB hexamer assembles on each DNA strand where it exits the tetramer. Each RuvB hexamer is contacted by two RuvA subunits (via domain III) on 2 adjacent RuvB subunits; this complex drives branch migration. In the full resolvosome a probable DNA-RuvA(4)-RuvB(12)-RuvC(2) complex forms which resolves the HJ.

Its subcellular location is the cytoplasm. The RuvA-RuvB-RuvC complex processes Holliday junction (HJ) DNA during genetic recombination and DNA repair, while the RuvA-RuvB complex plays an important role in the rescue of blocked DNA replication forks via replication fork reversal (RFR). RuvA specifically binds to HJ cruciform DNA, conferring on it an open structure. The RuvB hexamer acts as an ATP-dependent pump, pulling dsDNA into and through the RuvAB complex. HJ branch migration allows RuvC to scan DNA until it finds its consensus sequence, where it cleaves and resolves the cruciform DNA. This Methylobacterium nodulans (strain LMG 21967 / CNCM I-2342 / ORS 2060) protein is Holliday junction branch migration complex subunit RuvA.